A 386-amino-acid polypeptide reads, in one-letter code: 2-isopropylmalate synthase (386 aa).

One can recognise a Pyruvate carboxyltransferase domain in the interval 12–265 (VRIFDTTLRD…EVNIKTYKLY (254 aa)). Positions 21, 203, 205, and 239 each coordinate a divalent metal cation.

The protein belongs to the alpha-IPM synthase/homocitrate synthase family. In terms of assembly, homodimer. A divalent metal cation serves as cofactor.

It catalyses the reaction 3-methyl-2-oxobutanoate + acetyl-CoA + H2O = (2S)-2-isopropylmalate + CoA + H(+). It functions in the pathway amino-acid biosynthesis; L-leucine biosynthesis; L-leucine from 3-methyl-2-oxobutanoate: step 1/4. Its function is as follows. Catalyzes the condensation of the acetyl group of acetyl-CoA with 3-methyl-2-oxobutanoate (2-oxoisovalerate) to form 3-carboxy-3-hydroxy-4-methylpentanoate (2-isopropylmalate). Carries out the first step of the leucine biosynthesis pathway. The chain is 2-isopropylmalate synthase (leuA) from Sulfurisphaera tokodaii (strain DSM 16993 / JCM 10545 / NBRC 100140 / 7) (Sulfolobus tokodaii).